The sequence spans 469 residues: ATP sulfurylase 4, chloroplastic (469 aa).

A chloroplast-targeting transit peptide spans 1–51 (MASSAAAIVSGSPFRSSPLIHNHHASRYAPGSISVVSLPRQVSRRGLSVKS).

This sequence belongs to the sulfate adenylyltransferase family. As to quaternary structure, homotetramer. In terms of tissue distribution, expressed in roots and leaves.

The protein localises to the plastid. Its subcellular location is the chloroplast stroma. The catalysed reaction is sulfate + ATP + H(+) = adenosine 5'-phosphosulfate + diphosphate. The protein operates within sulfur metabolism; hydrogen sulfide biosynthesis; sulfite from sulfate: step 1/3. In terms of biological role, sulfate adenylyltransferase. Catalyzes the first step of the sulfate assimilation pathway. The chain is ATP sulfurylase 4, chloroplastic (APS4) from Arabidopsis thaliana (Mouse-ear cress).